Reading from the N-terminus, the 169-residue chain is ATP synthase subunit b (169 aa).

The helical transmembrane segment at 12-32 threads the bilayer; that stretch reads HIYLGNAIWYLLCFAILMLLI.

Belongs to the ATPase B chain family. As to quaternary structure, F-type ATPases have 2 components, F(1) - the catalytic core - and F(0) - the membrane proton channel. F(1) has five subunits: alpha(3), beta(3), gamma(1), delta(1), epsilon(1). F(0) has three main subunits: a(1), b(2) and c(10-14). The alpha and beta chains form an alternating ring which encloses part of the gamma chain. F(1) is attached to F(0) by a central stalk formed by the gamma and epsilon chains, while a peripheral stalk is formed by the delta and b chains.

The protein localises to the cell membrane. Increases 2-fold following exposure to low pH. Functionally, f(1)F(0) ATP synthase produces ATP from ADP in the presence of a proton or sodium gradient. F-type ATPases consist of two structural domains, F(1) containing the extramembraneous catalytic core and F(0) containing the membrane proton channel, linked together by a central stalk and a peripheral stalk. During catalysis, ATP synthesis in the catalytic domain of F(1) is coupled via a rotary mechanism of the central stalk subunits to proton translocation. In terms of biological role, component of the F(0) channel, it forms part of the peripheral stalk, linking F(1) to F(0). The sequence is that of ATP synthase subunit b from Lactobacillus acidophilus (strain ATCC 700396 / NCK56 / N2 / NCFM).